Consider the following 153-residue polypeptide: NAD(P)H-quinone oxidoreductase subunit N (153 aa).

The protein belongs to the complex I NdhN subunit family. In terms of assembly, NDH-1 can be composed of about 15 different subunits; different subcomplexes with different compositions have been identified which probably have different functions.

Its subcellular location is the cellular thylakoid membrane. The enzyme catalyses a plastoquinone + NADH + (n+1) H(+)(in) = a plastoquinol + NAD(+) + n H(+)(out). It carries out the reaction a plastoquinone + NADPH + (n+1) H(+)(in) = a plastoquinol + NADP(+) + n H(+)(out). NDH-1 shuttles electrons from an unknown electron donor, via FMN and iron-sulfur (Fe-S) centers, to quinones in the respiratory and/or the photosynthetic chain. The immediate electron acceptor for the enzyme in this species is believed to be plastoquinone. Couples the redox reaction to proton translocation, and thus conserves the redox energy in a proton gradient. Cyanobacterial NDH-1 also plays a role in inorganic carbon-concentration. This chain is NAD(P)H-quinone oxidoreductase subunit N, found in Prochlorococcus marinus (strain MIT 9313).